A 433-amino-acid polypeptide reads, in one-letter code: UDP-N-acetylmuramate--L-alanine ligase (433 aa).

108 to 114 (GAHGKTS) lines the ATP pocket.

The protein belongs to the MurCDEF family.

The protein localises to the cytoplasm. It catalyses the reaction UDP-N-acetyl-alpha-D-muramate + L-alanine + ATP = UDP-N-acetyl-alpha-D-muramoyl-L-alanine + ADP + phosphate + H(+). It functions in the pathway cell wall biogenesis; peptidoglycan biosynthesis. In terms of biological role, cell wall formation. This Anoxybacillus flavithermus (strain DSM 21510 / WK1) protein is UDP-N-acetylmuramate--L-alanine ligase.